Reading from the N-terminus, the 144-residue chain is uncharacterized protein (144 aa).

The next 4 membrane-spanning stretches (helical) occupy residues 27-47 (VVCA…IPDI), 49-69 (LLPI…LLAL), 83-103 (IVLL…DATV), and 106-126 (ALDM…ILNV).

It localises to the membrane. This is an uncharacterized protein from Saccharomyces cerevisiae (strain ATCC 204508 / S288c) (Baker's yeast).